Consider the following 172-residue polypeptide: 3-hydroxydecanoyl-[acyl-carrier-protein] dehydratase (172 aa).

Histidine 71 is an active-site residue.

This sequence belongs to the thioester dehydratase family. FabA subfamily. Homodimer.

It is found in the cytoplasm. The catalysed reaction is a (3R)-hydroxyacyl-[ACP] = a (2E)-enoyl-[ACP] + H2O. It catalyses the reaction (3R)-hydroxydecanoyl-[ACP] = (2E)-decenoyl-[ACP] + H2O. It carries out the reaction (2E)-decenoyl-[ACP] = (3Z)-decenoyl-[ACP]. The protein operates within lipid metabolism; fatty acid biosynthesis. Functionally, necessary for the introduction of cis unsaturation into fatty acids. Catalyzes the dehydration of (3R)-3-hydroxydecanoyl-ACP to E-(2)-decenoyl-ACP and then its isomerization to Z-(3)-decenoyl-ACP. Can catalyze the dehydratase reaction for beta-hydroxyacyl-ACPs with saturated chain lengths up to 16:0, being most active on intermediate chain length. The protein is 3-hydroxydecanoyl-[acyl-carrier-protein] dehydratase of Cronobacter sakazakii (strain ATCC BAA-894) (Enterobacter sakazakii).